A 377-amino-acid chain; its full sequence is Rhodopsin, long-wavelength (377 aa).

At 1–51 (MIAVSGPSYEAFSYGGQARFNNQTVVDKVPPDMLHLIDANWYQYPPLNPMW) the chain is on the extracellular side. A glycan (N-linked (GlcNAc...) asparagine) is linked at N22. A helical transmembrane segment spans residues 52–76 (HGILGFVIGMLGFVSAMGNGMVVYI). Over 77-88 (FLSTKSLRTPSN) the chain is Cytoplasmic. Residues 89-113 (LFVINLAISNFLMMFCMSPPMVINC) traverse the membrane as a helical segment. At 114–128 (YYETWVLGPLFCQIY) the chain is on the extracellular side. C125 and C202 are joined by a disulfide. A helical transmembrane segment spans residues 129-148 (AMLGSLFGCGSIWTMTMIAF). Residues 149-167 (DRYNVIVKGLSGKPLSING) are Cytoplasmic-facing. A helical membrane pass occupies residues 168 to 191 (ALIRIIAIWLFSLGWTIAPMFGWN). At 192 to 215 (RYVPEGNMTACGTDYFNRGLLSAS) the chain is on the extracellular side. N198 is a glycosylation site (N-linked (GlcNAc...) asparagine). A helical transmembrane segment spans residues 216–243 (YLVCYGIWVYFVPLFLIIYSYWFIIQAV). The Cytoplasmic portion of the chain corresponds to 244–278 (AAHEKNMREQAKKMNVASLRSSENQNTSAECKLAK). A helical transmembrane segment spans residues 279 to 302 (VALMTISLWFMAWTPYLVINFSGI). Residues 303–309 (FNLVKIS) are Extracellular-facing. A helical transmembrane segment spans residues 310 to 334 (PLFTIWGSLFAKANAVYNPIVYGIS). Residue K321 is modified to N6-(retinylidene)lysine. At 335–377 (HPKYRAALFAKFPSLACAAEPSSDAVSTTSGTTTVTDNEKSNA) the chain is on the cytoplasmic side. Low complexity predominate over residues 357–370 (SDAVSTTSGTTTVT). The segment at 357–377 (SDAVSTTSGTTTVTDNEKSNA) is disordered.

The protein belongs to the G-protein coupled receptor 1 family. Opsin subfamily. In terms of processing, phosphorylated on some or all of the serine and threonine residues present in the C-terminal region.

It localises to the membrane. Visual pigments are the light-absorbing molecules that mediate vision. They consist of an apoprotein, opsin, covalently linked to 11-cis-retinal. The chain is Rhodopsin, long-wavelength from Apis mellifera (Honeybee).